The primary structure comprises 75 residues: Phi-liotoxin-Lw1a (75 aa).

The N-terminal stretch at 1-25 is a signal peptide; the sequence is MNFATKVSLLLLAIAVIVIVEGGEG. Residues 26–39 constitute a propeptide that is removed on maturation; sequence DSWFEEHEESDTER. Disulfide bonds link C50-C62 and C56-C68.

Expressed by the venom gland.

Its subcellular location is the secreted. Affects the activity of both ryanodine-sensitive calcium-release channels RyR1 and RyR2 with high potency. At lower concentrations the toxin increases full openings of the RyRs, and at higher concentrations it inhibits full openings and induce openings to subconductance levels and reduces the number of full conductance openings. The different actions may be attributed to the toxins binding at different sites on the RyRs, with binding at a high-affinity site mediating the increase in full openings and the induction of subconductance states evoked upon binding to a lower-affinity site. Insect-selective toxin that provokes a dose-dependent contractile paralysis in crickets and blowfly larvae, followed by death. The sequence is that of Phi-liotoxin-Lw1a from Hormurus waigiensis (Australian rainforest scorpion).